The sequence spans 91 residues: UPF0223 protein SAR1071 (91 aa).

Belongs to the UPF0223 family.

The sequence is that of UPF0223 protein SAR1071 from Staphylococcus aureus (strain MRSA252).